A 388-amino-acid polypeptide reads, in one-letter code: Deoxyuridine 5'-triphosphate nucleotidohydrolase (388 aa).

Positions 77–88 are enriched in basic and acidic residues; that stretch reads EEKYDKEQHPGE. 2 disordered regions span residues 77–96 and 336–388; these read EEKY…SPLP and THTP…PRHP. The span at 351-363 shows a compositional bias: acidic residues; it reads VDDDVDETEEDEK.

Belongs to the dUTPase family. Mg(2+) is required as a cofactor.

The protein resides in the virion. The enzyme catalyses dUTP + H2O = dUMP + diphosphate + H(+). Its pathway is pyrimidine metabolism; dUMP biosynthesis; dUMP from dCTP (dUTP route): step 2/2. Involved in nucleotide metabolism: produces dUMP, the immediate precursor of thymidine nucleotides and decreases the intracellular concentration of dUTP to avoid uracil incorporation into viral DNA. In Human cytomegalovirus (strain AD169) (HHV-5), this protein is Deoxyuridine 5'-triphosphate nucleotidohydrolase.